The following is a 182-amino-acid chain: pEARLI1-like lipid transfer protein 2 (182 aa).

Residues M1 to G25 form the signal peptide. A compositionally biased stretch (pro residues) spans S33–T92. The interval S33–G94 is disordered. 7 repeat units span residues P42 to S46, P47 to T51, P52 to S56, P62 to S66, P67 to T71, P72 to S76, and P77 to S81. The interval P42–S81 is 7 X 5 AA repeats of P-[KS]-V-P-[ST].

Belongs to the plant LTP family. PEARLI1 subfamily.

The protein localises to the secreted. Its subcellular location is the cell wall. Its function is as follows. Probable lipid transfer protein (LTP). May improve freezing survival. Seems to control the flowering process and lignin synthesis. Confers resistance to Botrytis cinerea. In Arabidopsis thaliana (Mouse-ear cress), this protein is pEARLI1-like lipid transfer protein 2.